The sequence spans 489 residues: Probable serine protease EDA2 (489 aa).

Positions 1–25 (MSLEFGFILINIFTAIVSFSTLSHA) are cleaved as a signal peptide. N-linked (GlcNAc...) asparagine glycans are attached at residues N35, N51, and N162. The active-site Charge relay system is the S178. 4 N-linked (GlcNAc...) asparagine glycosylation sites follow: N253, N293, N365, and N406. Catalysis depends on D410, which acts as the Charge relay system. N419 carries N-linked (GlcNAc...) asparagine glycosylation. H436 (charge relay system) is an active-site residue. The N-linked (GlcNAc...) asparagine glycan is linked to N456.

It belongs to the peptidase S28 family.

It localises to the secreted. May be involved in a proteolytic pathway controlling the nuclear division phase of megagametogenesis. The polypeptide is Probable serine protease EDA2 (EDA2) (Arabidopsis thaliana (Mouse-ear cress)).